The chain runs to 251 residues: Small ribosomal subunit protein uS2 (251 aa).

Belongs to the universal ribosomal protein uS2 family.

In Chlorobium chlorochromatii (strain CaD3), this protein is Small ribosomal subunit protein uS2.